The chain runs to 138 residues: ATP synthase epsilon chain (138 aa).

Belongs to the ATPase epsilon chain family. F-type ATPases have 2 components, CF(1) - the catalytic core - and CF(0) - the membrane proton channel. CF(1) has five subunits: alpha(3), beta(3), gamma(1), delta(1), epsilon(1). CF(0) has three main subunits: a, b and c.

Its subcellular location is the cell inner membrane. Its function is as follows. Produces ATP from ADP in the presence of a proton gradient across the membrane. This Verminephrobacter eiseniae (strain EF01-2) protein is ATP synthase epsilon chain.